Consider the following 239-residue polypeptide: Ribonuclease PH (239 aa).

Phosphate is bound by residues Arg86 and 124 to 126 (GTR).

The protein belongs to the RNase PH family. In terms of assembly, homohexameric ring arranged as a trimer of dimers.

The catalysed reaction is tRNA(n+1) + phosphate = tRNA(n) + a ribonucleoside 5'-diphosphate. Phosphorolytic 3'-5' exoribonuclease that plays an important role in tRNA 3'-end maturation. Removes nucleotide residues following the 3'-CCA terminus of tRNAs; can also add nucleotides to the ends of RNA molecules by using nucleoside diphosphates as substrates, but this may not be physiologically important. Probably plays a role in initiation of 16S rRNA degradation (leading to ribosome degradation) during starvation. This chain is Ribonuclease PH, found in Rhizobium etli (strain CIAT 652).